The chain runs to 342 residues: Nicotinate-nucleotide--dimethylbenzimidazole phosphoribosyltransferase (342 aa).

Catalysis depends on glutamate 311, which acts as the Proton acceptor.

This sequence belongs to the CobT family.

The catalysed reaction is 5,6-dimethylbenzimidazole + nicotinate beta-D-ribonucleotide = alpha-ribazole 5'-phosphate + nicotinate + H(+). Its pathway is nucleoside biosynthesis; alpha-ribazole biosynthesis; alpha-ribazole from 5,6-dimethylbenzimidazole: step 1/2. Catalyzes the synthesis of alpha-ribazole-5'-phosphate from nicotinate mononucleotide (NAMN) and 5,6-dimethylbenzimidazole (DMB). The polypeptide is Nicotinate-nucleotide--dimethylbenzimidazole phosphoribosyltransferase (Vibrio vulnificus (strain CMCP6)).